We begin with the raw amino-acid sequence, 51 residues long: rpoE leader peptide (51 aa).

In terms of biological role, a short protein whose stop codon overlaps with the start codon of downstream rpoE; a premature stop codon at position 12 results in decreased expression of ECF sigma factor RpoE, thus they are translationally coupled. This is rpoE leader peptide from Escherichia coli (strain K12).